The chain runs to 499 residues: Aspartyl/glutamyl-tRNA(Asn/Gln) amidotransferase subunit B (499 aa).

Belongs to the GatB/GatE family. GatB subfamily. Heterotrimer of A, B and C subunits.

It carries out the reaction L-glutamyl-tRNA(Gln) + L-glutamine + ATP + H2O = L-glutaminyl-tRNA(Gln) + L-glutamate + ADP + phosphate + H(+). The enzyme catalyses L-aspartyl-tRNA(Asn) + L-glutamine + ATP + H2O = L-asparaginyl-tRNA(Asn) + L-glutamate + ADP + phosphate + 2 H(+). Functionally, allows the formation of correctly charged Asn-tRNA(Asn) or Gln-tRNA(Gln) through the transamidation of misacylated Asp-tRNA(Asn) or Glu-tRNA(Gln) in organisms which lack either or both of asparaginyl-tRNA or glutaminyl-tRNA synthetases. The reaction takes place in the presence of glutamine and ATP through an activated phospho-Asp-tRNA(Asn) or phospho-Glu-tRNA(Gln). This Bifidobacterium longum (strain DJO10A) protein is Aspartyl/glutamyl-tRNA(Asn/Gln) amidotransferase subunit B.